The chain runs to 270 residues: Homeobox protein pal-1 (270 aa).

Disordered regions lie at residues 1–24 (MSVD…TTVP), 96–130 (VKPP…SGAA), and 175–201 (LGNN…TNNV). Low complexity-rich tracts occupy residues 14-24 (SSSTPSPTTVP) and 101-130 (SNGS…SGAA). Residues 206–265 (ADKYRMVYSDYQRLELEKEFHTSPFITSDRKSQLSTMLSLTERQIKIWFQNRRAKDRRDK) constitute a DNA-binding region (homeobox).

Belongs to the Caudal homeobox family. As to quaternary structure, interacts with tir-1 and let-756. In terms of tissue distribution, blastomeres. Embryo. Oocytes.

Its subcellular location is the nucleus. The protein resides in the chromosome. It localises to the centromere. It is found in the kinetochore. Transcriptional activator. Interacts with promoter regions for tbx-8.9, tbx-9, elt-1, hnd-1, scrt-1, and vab-7 genes. Binds the sequence ATTTATGAC. Binds to the enhancer region of the hlh-1 gene promoter during embryonic body wall muscle development. Activates the gene for mab-5 in embryo development. Necessary for vab-7 expression in C blastomeres in the posterior of embryos. Required for posterior V6 neuroectoblast cell fate specification during postembryonic neurogenesis (patterning) which generates the characteristic ray lineage during male tail development. Binds to ced-3 promoter and activated expression which is crucial for tail-spike cell death. Has a role in E cell specification in endoderm development and body wall muscle development. This Caenorhabditis elegans protein is Homeobox protein pal-1 (pal-1).